The primary structure comprises 688 residues: UvrABC system protein B (688 aa).

The 389-residue stretch at 41 to 429 (ANFEAGLAKQ…AGEVTELVVR (389 aa)) folds into the Helicase ATP-binding domain. Residue 54-61 (GVTGSGKT) coordinates ATP. The short motif at 107-130 (YYDYYQPEAYVPSSDTFIEKDSSI) is the Beta-hairpin element. The Helicase C-terminal domain maps to 446 to 612 (QVDDLMSEIH…SVERPISDIM (167 aa)). Positions 616 to 646 (REDAAEKKSGKGRSKSRQVAEETPDYRAMKP) are disordered. Residues 633 to 645 (QVAEETPDYRAMK) show a composition bias toward basic and acidic residues. A UVR domain is found at 650-685 (AGKLKSLEQKMYQHAKDLEFEAAAQIRDQIQKLKTA).

Belongs to the UvrB family. As to quaternary structure, forms a heterotetramer with UvrA during the search for lesions. Interacts with UvrC in an incision complex.

The protein localises to the cytoplasm. In terms of biological role, the UvrABC repair system catalyzes the recognition and processing of DNA lesions. A damage recognition complex composed of 2 UvrA and 2 UvrB subunits scans DNA for abnormalities. Upon binding of the UvrA(2)B(2) complex to a putative damaged site, the DNA wraps around one UvrB monomer. DNA wrap is dependent on ATP binding by UvrB and probably causes local melting of the DNA helix, facilitating insertion of UvrB beta-hairpin between the DNA strands. Then UvrB probes one DNA strand for the presence of a lesion. If a lesion is found the UvrA subunits dissociate and the UvrB-DNA preincision complex is formed. This complex is subsequently bound by UvrC and the second UvrB is released. If no lesion is found, the DNA wraps around the other UvrB subunit that will check the other stand for damage. The protein is UvrABC system protein B of Xanthomonas oryzae pv. oryzae (strain KACC10331 / KXO85).